The chain runs to 405 residues: uncharacterized protein (405 aa).

12 consecutive transmembrane segments (helical) span residues 32–52, 53–73, 84–104, 108–128, 150–170, 171–191, 237–257, 260–280, 291–311, 314–334, 352–372, and 378–398; these read MFVL…VLAG, WLTF…GVLL, IDMI…WLGW, PVVC…IAGI, AVYS…VGWL, GPEA…VCLS, WGAL…VAAG, VVGL…LLAG, IMTA…AEFG, GLTI…VAML, ISIS…GVVI, and AIFV…LSIP.

The protein belongs to the major facilitator superfamily.

It is found in the cell membrane. This is an uncharacterized protein from Sinorhizobium fredii (strain NBRC 101917 / NGR234).